The sequence spans 430 residues: ATP-dependent RNA helicase RhlB (430 aa).

A Q motif motif is present at residues 9–37 (QKFSDFALHPQVIEALETKGFHNCTPIQA). Residues 40-219 (LPFTLSGRDV…FENMNNAEYV (180 aa)) enclose the Helicase ATP-binding domain. ATP is bound at residue 53–60 (AQTGTGKT). Positions 165-168 (DEAD) match the DEAD box motif. The Helicase C-terminal domain occupies 245 to 390 (RLLQTLIEEE…VSRYNSDALM (146 aa)). A disordered region spans residues 388-430 (ALMTDLPPPKRLTRNRSGNGPRRGGNNNRRSSASRSPNRKRSG). Positions 402 to 423 (NRSGNGPRRGGNNNRRSSASRS) are enriched in low complexity.

Belongs to the DEAD box helicase family. RhlB subfamily. In terms of assembly, component of the RNA degradosome, which is a multiprotein complex involved in RNA processing and mRNA degradation.

The protein localises to the cytoplasm. It catalyses the reaction ATP + H2O = ADP + phosphate + H(+). Its function is as follows. DEAD-box RNA helicase involved in RNA degradation. Has RNA-dependent ATPase activity and unwinds double-stranded RNA. The chain is ATP-dependent RNA helicase RhlB from Erwinia tasmaniensis (strain DSM 17950 / CFBP 7177 / CIP 109463 / NCPPB 4357 / Et1/99).